A 56-amino-acid polypeptide reads, in one-letter code: PI-stichotoxin-Hcr2p (56 aa).

One can recognise a BPTI/Kunitz inhibitor domain in the interval 4 to 54 (CLEPKVVGPCTAYFRRFYYDSETGKCTPFIHGGCEGNGNNFETLRACRAIC). Cystine bridges form between C4–C54, C13–C37, and C29–C50.

Belongs to the venom Kunitz-type family. Sea anemone type 2 potassium channel toxin subfamily.

Its subcellular location is the secreted. The protein resides in the nematocyst. In terms of biological role, this recombinant serine protease inhibitor inhibits trypsin (Ki=100 nM). It may also inhibit the TRPV1 receptor of the pain pathway. It possesses anti-inflammatory activity in vitro. It blocks histamine influence on intracellular calcium concentration in murine bone marrow-derived macrophages (84% inhibition at 10 uM and 67.2% at 1 uM), which can indicate inhibition of H1-histamine receptor (HRH1). In vitro, it shows cytoprotective activity in the oxidative stress agent 6-hydroxydopamine (6-OHDA)-induced neurotoxicity model. In this model, it decreases reactive oxygen species (ROS) level, and increases cell viability in a correlated manner. In vivo, it shows analgesic activity, since it increases hot plate and tail flick withdrawal latencies, when using a mice thermal pain stimulation model. The polypeptide is PI-stichotoxin-Hcr2p (Radianthus crispa (Leathery sea anemone)).